The chain runs to 246 residues: 5-oxoprolinase subunit A (246 aa).

This sequence belongs to the LamB/PxpA family. In terms of assembly, forms a complex composed of PxpA, PxpB and PxpC.

The catalysed reaction is 5-oxo-L-proline + ATP + 2 H2O = L-glutamate + ADP + phosphate + H(+). In terms of biological role, catalyzes the cleavage of 5-oxoproline to form L-glutamate coupled to the hydrolysis of ATP to ADP and inorganic phosphate. The protein is 5-oxoprolinase subunit A of Cupriavidus metallidurans (strain ATCC 43123 / DSM 2839 / NBRC 102507 / CH34) (Ralstonia metallidurans).